The primary structure comprises 351 residues: MKKILFLFTASLLLHVTLQAAKISDVASIVGVRDNHLIGYSLVVGLQKTGDGTTSKFTLQSIANMLKAMNIDMKPIDIKSKNVAAVVVTAELAPFARQGDKINITVSSIGDAKSLEGGTLLMTPLKGVDGKIYALAQGAVSIGGRNGKGAGDSHPTAGLIYDGGLVEREIAIDLYNQDYVTLSLKDANFQNSVSIQKTLNGYYSTEVAVAMDSRTVKLKKPSNKTMIEFLAEVQEINMDYNVQDRIVINERTGTIISGVGIHIKPIIMTHGDITIKITEQENPDKPAGSMVVDENMVIGLNENELYTKEGTTTVANLVRSLQKLGATPKDIISILEAMKSAGSISAELKLI.

The first 20 residues, 1–20, serve as a signal peptide directing secretion; it reads MKKILFLFTASLLLHVTLQA.

It belongs to the FlgI family. As to quaternary structure, the basal body constitutes a major portion of the flagellar organelle and consists of four rings (L,P,S, and M) mounted on a central rod.

It localises to the periplasm. Its subcellular location is the bacterial flagellum basal body. Functionally, assembles around the rod to form the L-ring and probably protects the motor/basal body from shearing forces during rotation. In Sulfurimonas denitrificans (strain ATCC 33889 / DSM 1251) (Thiomicrospira denitrificans (strain ATCC 33889 / DSM 1251)), this protein is Flagellar P-ring protein.